Here is a 132-residue protein sequence, read N- to C-terminus: Peptide methionine sulfoxide reductase MsrB (132 aa).

The 123-residue stretch at D9–K131 folds into the MsrB domain. Residues C48, C51, C97, and C100 each coordinate Zn(2+). Residue C120 is the Nucleophile of the active site.

It belongs to the MsrB Met sulfoxide reductase family. The cofactor is Zn(2+).

The enzyme catalyses L-methionyl-[protein] + [thioredoxin]-disulfide + H2O = L-methionyl-(R)-S-oxide-[protein] + [thioredoxin]-dithiol. This Thiobacillus denitrificans (strain ATCC 25259 / T1) protein is Peptide methionine sulfoxide reductase MsrB.